The following is a 245-amino-acid chain: Pyridoxine 5'-phosphate synthase (245 aa).

2 residues coordinate 3-amino-2-oxopropyl phosphate: Asn8 and Arg19. The active-site Proton acceptor is His44. Residues Arg46 and His51 each contribute to the 1-deoxy-D-xylulose 5-phosphate site. The active-site Proton acceptor is Glu76. Thr106 provides a ligand contact to 1-deoxy-D-xylulose 5-phosphate. His198 (proton donor) is an active-site residue. 3-amino-2-oxopropyl phosphate is bound by residues Asp199 and 221–222; that span reads GH.

This sequence belongs to the PNP synthase family. In terms of assembly, homooctamer; tetramer of dimers.

The protein localises to the cytoplasm. It carries out the reaction 3-amino-2-oxopropyl phosphate + 1-deoxy-D-xylulose 5-phosphate = pyridoxine 5'-phosphate + phosphate + 2 H2O + H(+). It participates in cofactor biosynthesis; pyridoxine 5'-phosphate biosynthesis; pyridoxine 5'-phosphate from D-erythrose 4-phosphate: step 5/5. In terms of biological role, catalyzes the complicated ring closure reaction between the two acyclic compounds 1-deoxy-D-xylulose-5-phosphate (DXP) and 3-amino-2-oxopropyl phosphate (1-amino-acetone-3-phosphate or AAP) to form pyridoxine 5'-phosphate (PNP) and inorganic phosphate. The protein is Pyridoxine 5'-phosphate synthase of Brucella anthropi (strain ATCC 49188 / DSM 6882 / CCUG 24695 / JCM 21032 / LMG 3331 / NBRC 15819 / NCTC 12168 / Alc 37) (Ochrobactrum anthropi).